Reading from the N-terminus, the 432-residue chain is Putative transferase At1g60990, chloroplastic (432 aa).

The transit peptide at 1–57 (MNLLQSCKDMAMMMRIDSVSHITNTALLPCLYNGTVLRRRSLSLRKCGFRERKFQLR) directs the protein to the chloroplast.

It belongs to the GcvT family. In terms of tissue distribution, expressed in young leaves (at protein level).

It is found in the plastid. The protein localises to the chloroplast. Its function is as follows. Folate-dependent protein involved in Fe/S cluster biogenesis. Functionally complements an E.coli mutant defective in ygfZ. This chain is Putative transferase At1g60990, chloroplastic, found in Arabidopsis thaliana (Mouse-ear cress).